The following is a 390-amino-acid chain: GTPase Obg (390 aa).

Residues 1 to 159 (MKFVDEASIL…RELLLELMLL (159 aa)) form the Obg domain. Positions 127–147 (NTRFKSSVNRTPRQKTNGTPG) are disordered. The span at 129 to 145 (RFKSSVNRTPRQKTNGT) shows a compositional bias: polar residues. The OBG-type G domain maps to 160–333 (ADVGMLGMPN…LCWDVMTFII (174 aa)). Residues 166–173 (GMPNAGKS), 191–195 (FTTLV), 213–216 (DIPG), 283–286 (NKID), and 314–316 (SAA) contribute to the GTP site. Residues Ser-173 and Thr-193 each coordinate Mg(2+).

This sequence belongs to the TRAFAC class OBG-HflX-like GTPase superfamily. OBG GTPase family. In terms of assembly, monomer. The cofactor is Mg(2+).

It is found in the cytoplasm. An essential GTPase which binds GTP, GDP and possibly (p)ppGpp with moderate affinity, with high nucleotide exchange rates and a fairly low GTP hydrolysis rate. Plays a role in control of the cell cycle, stress response, ribosome biogenesis and in those bacteria that undergo differentiation, in morphogenesis control. This is GTPase Obg from Shigella dysenteriae serotype 1 (strain Sd197).